We begin with the raw amino-acid sequence, 501 residues long: Lysine--tRNA ligase (501 aa).

Mg(2+)-binding residues include Glu-406 and Glu-413.

This sequence belongs to the class-II aminoacyl-tRNA synthetase family. As to quaternary structure, homodimer. Requires Mg(2+) as cofactor.

The protein resides in the cytoplasm. It carries out the reaction tRNA(Lys) + L-lysine + ATP = L-lysyl-tRNA(Lys) + AMP + diphosphate. In Halalkalibacterium halodurans (strain ATCC BAA-125 / DSM 18197 / FERM 7344 / JCM 9153 / C-125) (Bacillus halodurans), this protein is Lysine--tRNA ligase (lysS).